A 901-amino-acid polypeptide reads, in one-letter code: Probable inorganic carbon transporter subunit DabA (901 aa).

4 residues coordinate Zn(2+): Cys-424, Asp-426, His-606, and Cys-621.

The protein belongs to the inorganic carbon transporter (TC 9.A.2) DabA family. As to quaternary structure, forms a complex with DabB. Zn(2+) serves as cofactor.

Its subcellular location is the cell membrane. In terms of biological role, part of an energy-coupled inorganic carbon pump. In Staphylococcus aureus (strain USA300), this protein is Probable inorganic carbon transporter subunit DabA.